The following is a 498-amino-acid chain: DNA primase (498 aa).

The CHC2-type zinc finger occupies 35–59 (CPFHPDDTPSFYVSPSKQIFKCFGC). A Toprim domain is found at 243–324 (GFAILVEGYF…EVYPVYLPEG (82 aa)). Glutamate 249, aspartate 293, and aspartate 295 together coordinate Mg(2+).

This sequence belongs to the DnaG primase family. Monomer. Interacts with DnaB. The cofactor is Zn(2+). Requires Mg(2+) as cofactor.

The catalysed reaction is ssDNA + n NTP = ssDNA/pppN(pN)n-1 hybrid + (n-1) diphosphate.. Its function is as follows. RNA polymerase that catalyzes the synthesis of short RNA molecules used as primers for DNA polymerase during DNA replication. The chain is DNA primase from Aquifex aeolicus (strain VF5).